A 397-amino-acid polypeptide reads, in one-letter code: Lysophospholipid transporter LplT (397 aa).

11 consecutive transmembrane segments (helical) span residues 21 to 41, 53 to 73, 91 to 111, 139 to 159, 164 to 184, 229 to 249, 257 to 277, 281 to 301, 304 to 324, 344 to 364, and 372 to 392; these read SAQF…LALL, ILQM…GQVA, LGAA…LVGI, LMES…GVLA, LAAL…NLFI, WGAG…ALGI, YLNA…AKLV, TVRR…FFSL, ALLP…FFIV, IAVQ…LYSL, and VVGI…GLWI.

The protein belongs to the major facilitator superfamily. LplT (TC 2.A.1.42) family.

The protein resides in the cell inner membrane. Catalyzes the facilitated diffusion of 2-acyl-glycero-3-phosphoethanolamine (2-acyl-GPE) into the cell. This Enterobacter sp. (strain 638) protein is Lysophospholipid transporter LplT.